The sequence spans 476 residues: Cysteine--tRNA ligase (476 aa).

Zn(2+) is bound at residue cysteine 31. Residues 33–43 carry the 'HIGH' region motif; sequence PTVYNYAHIGN. 3 residues coordinate Zn(2+): cysteine 211, histidine 236, and glutamate 240. Positions 269-273 match the 'KMSKS' region motif; that stretch reads KMSKS. Residue lysine 272 participates in ATP binding.

The protein belongs to the class-I aminoacyl-tRNA synthetase family. As to quaternary structure, monomer. The cofactor is Zn(2+).

It is found in the cytoplasm. It carries out the reaction tRNA(Cys) + L-cysteine + ATP = L-cysteinyl-tRNA(Cys) + AMP + diphosphate. The protein is Cysteine--tRNA ligase of Xanthomonas axonopodis pv. citri (strain 306).